Reading from the N-terminus, the 358-residue chain is MAMRGVDFKWYDGFFLSMLATSVIIVAVNWNRYRACEYPLHIWIVVDYTTVFIFRVFMFVDNGLASGLGLDFGSQQRNAMFCGRVVVLSVLSLLLYPFLWAWTVIGTQWFTKSKTCLPEEGQKWGFLIWLMFSYCGLLCIAFICVGKWLTRRQVHLLRAQQGIPISEFGILVDMIRVPDWAFEAAGQEMRGISQDAATYHPGLYLTPAQTEAVEALIQELPKFRLKAVPDDCGECLICLEEFHIGHEVRGLPCAHNFHVECIDQWLRLNVKCPRCRCSVFPDLDLSALSNLQSSGTEQHSQVNTETSEARYIRSQPQSESYFLRVQSLIHPVHTDTALETAENGGVPPVLTDLSPSRR.

A signal peptide spans 1–27 (MAMRGVDFKWYDGFFLSMLATSVIIVA). The next 3 membrane-spanning stretches (helical) occupy residues 40-60 (LHIWIVVDYTTVFIFRVFMFV), 85-105 (VVVLSVLSLLLYPFLWAWTVI), and 125-145 (GFLIWLMFSYCGLLCIAFICV). The RING-type; atypical zinc finger occupies 235–276 (CLICLEEFHIGHEVRGLPCAHNFHVECIDQWLRLNVKCPRCR). The disordered stretch occupies residues 336-358 (TALETAENGGVPPVLTDLSPSRR).

As to expression, expressed in roots, stems, leaves, flowers and siliques.

The protein resides in the membrane. It carries out the reaction S-ubiquitinyl-[E2 ubiquitin-conjugating enzyme]-L-cysteine + [acceptor protein]-L-lysine = [E2 ubiquitin-conjugating enzyme]-L-cysteine + N(6)-ubiquitinyl-[acceptor protein]-L-lysine.. It participates in protein modification; protein ubiquitination. Functionally, E3 ubiquitin protein ligase that acts as a positive regulator of sugar signaling during early seedling development. Possesses E3 ligase activity in vitro. The chain is E3 ubiquitin-protein ligase SIS3 (SIS3) from Arabidopsis thaliana (Mouse-ear cress).